The following is a 55-amino-acid chain: Large ribosomal subunit protein bL33 (55 aa).

The protein belongs to the bacterial ribosomal protein bL33 family.

The chain is Large ribosomal subunit protein bL33 from Jannaschia sp. (strain CCS1).